The chain runs to 306 residues: Phosphatidate cytidylyltransferase (306 aa).

A disordered region spans residues 1 to 28 (MTTNDAGTGNPAEQPARGAKQQPATETS). The next 8 membrane-spanning stretches (helical) occupy residues 36 to 56 (AAIV…VFVP), 82 to 102 (GYLI…WLTW), 103 to 123 (PFGA…CMIW), 151 to 171 (ATVF…MLVY), 180 to 200 (FCMM…GVLF), 218 to 238 (FAGS…FLVG), 241 to 261 (PWIG…GDLV), and 285 to 305 (MDRL…LTLL).

This sequence belongs to the CDS family.

The protein localises to the cell membrane. It carries out the reaction a 1,2-diacyl-sn-glycero-3-phosphate + CTP + H(+) = a CDP-1,2-diacyl-sn-glycerol + diphosphate. It participates in phospholipid metabolism; CDP-diacylglycerol biosynthesis; CDP-diacylglycerol from sn-glycerol 3-phosphate: step 3/3. The protein is Phosphatidate cytidylyltransferase (cdsA) of Mycobacterium bovis (strain ATCC BAA-935 / AF2122/97).